A 240-amino-acid chain; its full sequence is 7-cyano-7-deazaguanine synthase (240 aa).

9 to 19 provides a ligand contact to ATP; sequence FSGGLDSTACL. Residues Cys-195, Cys-210, Cys-213, and Cys-216 each contribute to the Zn(2+) site.

Belongs to the QueC family. It depends on Zn(2+) as a cofactor.

It carries out the reaction 7-carboxy-7-deazaguanine + NH4(+) + ATP = 7-cyano-7-deazaguanine + ADP + phosphate + H2O + H(+). The protein operates within purine metabolism; 7-cyano-7-deazaguanine biosynthesis. In terms of biological role, catalyzes the ATP-dependent conversion of 7-carboxy-7-deazaguanine (CDG) to 7-cyano-7-deazaguanine (preQ(0)). This chain is 7-cyano-7-deazaguanine synthase, found in Pyrococcus furiosus (strain ATCC 43587 / DSM 3638 / JCM 8422 / Vc1).